The primary structure comprises 554 residues: Glucose-6-phosphate isomerase (554 aa).

Glu-358 functions as the Proton donor in the catalytic mechanism. Residues His-389 and Lys-515 contribute to the active site. The span at Ala-527–Asp-540 shows a compositional bias: polar residues. A disordered region spans residues Ala-527 to Ser-554. Positions Leu-542–Ser-554 are enriched in basic and acidic residues.

Belongs to the GPI family.

It localises to the cytoplasm. The enzyme catalyses alpha-D-glucose 6-phosphate = beta-D-fructose 6-phosphate. The protein operates within carbohydrate biosynthesis; gluconeogenesis. It participates in carbohydrate degradation; glycolysis; D-glyceraldehyde 3-phosphate and glycerone phosphate from D-glucose: step 2/4. In terms of biological role, catalyzes the reversible isomerization of glucose-6-phosphate to fructose-6-phosphate. The protein is Glucose-6-phosphate isomerase of Mycobacterium avium (strain 104).